Reading from the N-terminus, the 200-residue chain is Probable UbiX-like flavin prenyltransferase (200 aa).

FMN contacts are provided by residues 9 to 11 (GAT), Ser36, 87 to 90 (SMKT), and Arg122.

This sequence belongs to the UbiX/PAD1 family. YclB subfamily. In terms of assembly, homododecamer.

It carries out the reaction dimethylallyl phosphate + FMNH2 = prenylated FMNH2 + phosphate. Its function is as follows. Involved in the non-oxidative decarboxylation and detoxification of phenolic derivatives under both aerobic and anaerobic conditions. Flavin prenyltransferase that catalyzes the synthesis of the prenylated FMN cofactor (prenyl-FMN) for phenolic acid decarboxylase. The protein is Probable UbiX-like flavin prenyltransferase of Streptomyces sp. (strain D7).